A 347-amino-acid chain; its full sequence is D-alanine--D-alanine ligase (347 aa).

The 210-residue stretch at 133–342 (KQAFAQASLP…FPDLVHRLIQ (210 aa)) folds into the ATP-grasp domain. Residue 169–224 (ETELGYPCFVKPANLGSSVGIAKVRDRAELEAALDQAAALDRRLIIEAAIDNPREV) coordinates ATP. The Mg(2+) site is built by Asp296, Glu309, and Asn311.

Belongs to the D-alanine--D-alanine ligase family. Mg(2+) serves as cofactor. It depends on Mn(2+) as a cofactor.

Its subcellular location is the cytoplasm. It catalyses the reaction 2 D-alanine + ATP = D-alanyl-D-alanine + ADP + phosphate + H(+). It functions in the pathway cell wall biogenesis; peptidoglycan biosynthesis. Functionally, cell wall formation. This is D-alanine--D-alanine ligase from Synechococcus elongatus (strain ATCC 33912 / PCC 7942 / FACHB-805) (Anacystis nidulans R2).